Reading from the N-terminus, the 278-residue chain is Octanoyl-[GcvH]:protein N-octanoyltransferase (278 aa).

The 207-residue stretch at 41–247 folds into the BPL/LPL catalytic domain; that stretch reads LVSPPTIRTW…LLHRLAGEVH (207 aa). The active-site Acyl-thioester intermediate is the cysteine 146.

The protein belongs to the octanoyltransferase LipL family.

The catalysed reaction is N(6)-octanoyl-L-lysyl-[glycine-cleavage complex H protein] + L-lysyl-[lipoyl-carrier protein] = N(6)-octanoyl-L-lysyl-[lipoyl-carrier protein] + L-lysyl-[glycine-cleavage complex H protein]. It participates in protein modification; protein lipoylation via endogenous pathway; protein N(6)-(lipoyl)lysine from octanoyl-[acyl-carrier-protein]. Catalyzes the amidotransfer (transamidation) of the octanoyl moiety from octanoyl-GcvH to the lipoyl domain of the E2 subunit of lipoate-dependent enzymes. This Lysinibacillus sphaericus (strain C3-41) protein is Octanoyl-[GcvH]:protein N-octanoyltransferase.